A 351-amino-acid polypeptide reads, in one-letter code: Photosystem II D2 protein (351 aa).

A helical transmembrane segment spans residues 39-59; that stretch reads CAYMAIGGWLTGTTFATSWYT. His116 provides a ligand contact to chlorophyll a. The chain crosses the membrane as a helical span at residues 123–139; the sequence is GFMLRQFEIARLVGVRP. Pheophytin a-binding residues include Gln128 and Asn141. A helical transmembrane segment spans residues 151-164; sequence LFVSVFLIYPLGQS. His196 serves as a coordination point for chlorophyll a. The helical transmembrane segment at 206–226 threads the bilayer; that stretch reads GALLCAIHGATVENTLFEDGD. Residues His213 and Phe260 each coordinate a plastoquinone. His213 is a Fe cation binding site. His267 lines the Fe cation pocket. Residues 277–293 form a helical membrane-spanning segment; it reads GLWMSAIGVVGLALNLR.

This sequence belongs to the reaction center PufL/M/PsbA/D family. PSII is composed of 1 copy each of membrane proteins PsbA, PsbB, PsbC, PsbD, PsbE, PsbF, PsbH, PsbI, PsbJ, PsbK, PsbL, PsbM, PsbT, PsbX, PsbY, PsbZ, Psb30/Ycf12, peripheral proteins PsbO, CyanoQ (PsbQ), PsbU, PsbV and a large number of cofactors. It forms dimeric complexes. The cofactor is The D1/D2 heterodimer binds P680, chlorophylls that are the primary electron donor of PSII, and subsequent electron acceptors. It shares a non-heme iron and each subunit binds pheophytin, quinone, additional chlorophylls, carotenoids and lipids. There is also a Cl(-1) ion associated with D1 and D2, which is required for oxygen evolution. The PSII complex binds additional chlorophylls, carotenoids and specific lipids..

The protein localises to the cellular thylakoid membrane. The catalysed reaction is 2 a plastoquinone + 4 hnu + 2 H2O = 2 a plastoquinol + O2. Photosystem II (PSII) is a light-driven water:plastoquinone oxidoreductase that uses light energy to abstract electrons from H(2)O, generating O(2) and a proton gradient subsequently used for ATP formation. It consists of a core antenna complex that captures photons, and an electron transfer chain that converts photonic excitation into a charge separation. The D1/D2 (PsbA/PsbD) reaction center heterodimer binds P680, the primary electron donor of PSII as well as several subsequent electron acceptors. D2 is needed for assembly of a stable PSII complex. The sequence is that of Photosystem II D2 protein from Prochlorothrix hollandica.